A 540-amino-acid polypeptide reads, in one-letter code: Glucose-6-phosphate isomerase (540 aa).

Glutamate 346 functions as the Proton donor in the catalytic mechanism. Residues histidine 377 and lysine 505 contribute to the active site.

Belongs to the GPI family.

It localises to the cytoplasm. It carries out the reaction alpha-D-glucose 6-phosphate = beta-D-fructose 6-phosphate. It participates in carbohydrate biosynthesis; gluconeogenesis. Its pathway is carbohydrate degradation; glycolysis; D-glyceraldehyde 3-phosphate and glycerone phosphate from D-glucose: step 2/4. Functionally, catalyzes the reversible isomerization of glucose-6-phosphate to fructose-6-phosphate. In Francisella philomiragia subsp. philomiragia (strain ATCC 25017 / CCUG 19701 / FSC 153 / O#319-036), this protein is Glucose-6-phosphate isomerase.